The following is a 2793-amino-acid chain: Iterative polyketide synthase afoE (2793 aa).

Residues 1 to 401 (MTRASASGSG…PEKPSFWLTP (401 aa)) are N-terminal acylcarrier protein transacylase domain (SAT). The active-site Nucleophile; for transacylase activity is C157. H279 functions as the Proton donor/acceptor; for transacylase activity in the catalytic mechanism. The Ketosynthase family 3 (KS3) domain maps to 435–862 (SEPIAIVGMS…GSNASMIVTQ (428 aa)). Catalysis depends on for beta-ketoacyl synthase activity residues C611, H746, and H785. The malonyl-CoA:ACP transacylase (MAT) stretch occupies residues 977 to 1265 (FGGQISRFVG…SSTITVMAGR (289 aa)). Residues 1384–1515 (WEFVGYQDDE…ATVEMRSSSD (132 aa)) are N-terminal hotdog fold. The region spanning 1384-1698 (WEFVGYQDDE…YMRVAKASMS (315 aa)) is the PKS/mFAS DH domain. Residues 1411-1696 (YVLSHVIAQT…VQYMRVAKAS (286 aa)) are product template (PT) domain. The active-site Proton acceptor; for dehydratase activity is the H1415. The tract at residues 1550–1698 (VEVLQGRNVY…YMRVAKASMS (149 aa)) is C-terminal hotdog fold. Residue D1607 is the Proton donor; for dehydratase activity of the active site. The tract at residues 1734–1776 (PEVRASSEPGAKVKASKTSKKEKKEKKPVTKAKSKSSKPSGWR) is disordered. Over residues 1747-1769 (KASKTSKKEKKEKKPVTKAKSKS) the composition is skewed to basic residues. The region spanning 1776-1850 (RDITEEVRNL…KFVQCVSNAL (75 aa)) is the Carrier domain. Residue S1810 is modified to O-(pantetheine 4'-phosphoryl)serine. Residues 1853 to 1903 (PNAGPAEAEDDEDEEKSDNSSSESASESDDAGSESSDTGILTPTGEEEQPL) form a disordered region. Over residues 1859 to 1868 (EAEDDEDEEK) the composition is skewed to acidic residues. Residues 2115 to 2294 (NLLAERIGRT…HVDWTDGNLP (180 aa)) form a methyltransferase domain region. The segment at 2360-2379 (SRAEKESGKTQAPHAAPGRR) is disordered. Residues 2387–2630 (VTGATGSLGS…QWIPVDYCAA (244 aa)) form an NADPH-binding domain region.

Pantetheine 4'-phosphate is required as a cofactor.

It carries out the reaction (3E,5E,7S)-5,7-dimethyl-2-oxonona-3,5-dienyl-[ACP] + 4 malonyl-CoA + AH2 + S-adenosyl-L-methionine + 3 H(+) = 6-[(3E,5E,7S)-5,7-dimethyl-2-oxonona-3,5-dienyl]-2,4-dihydroxy-3-methylbenzaldehyde + holo-[ACP] + A + S-adenosyl-L-homocysteine + 4 CO2 + 4 CoA + H2O. The protein operates within secondary metabolite biosynthesis. Functionally, iterative polyketide synthase; part of the gene cluster that mediates the biosynthesis of asperfuranone, a probable antitumor agent. The polyketide synthase afoG is responsible for producing the 3,5-dimethyloctadienone moiety from acetyl-CoA, three malonyl-CoA, and two S-adenosyl methionines (SAM). The 3,5-dimethyloctadienone moiety is then loaded onto the SAT domain of afoE and extended with four malonyl-CoA and one SAM, which leads to the formation of 2,4-dihydroxy-6-(5,7-dimethyl-2-oxo-trans-3-trans-5-nonadienyl)-3-methylbenzaldehyde (compound 2) after reductive release and aldol condensation. AfoD is the next enzyme in the biosynthesis sequence and hydroxylates the side chain at the benzylic position of compound 2. After benzylic hydroxylation, a furan ring is formed after five-member ring hemiacetal formation and water elimination. AfoF and afoC are proposed to oxidize the R-diketone proton and to reduce the unconjugated carbonyl group, respectively, to generate asperfuranone. Since no intermediates could be isolated from afoF and afoC deletants, the sequence of these two enzymes is not fully understood. Moreover, since afoC deletant still produces a small amount of asperfuranone, other endogenous oxidoreductases might catalyze the same reaction with much less efficiency. This Emericella nidulans (strain FGSC A4 / ATCC 38163 / CBS 112.46 / NRRL 194 / M139) (Aspergillus nidulans) protein is Iterative polyketide synthase afoE.